A 577-amino-acid polypeptide reads, in one-letter code: Arginine--tRNA ligase (577 aa).

The 'HIGH' region signature appears at 122–132 (PNVAKEMHVGH).

Belongs to the class-I aminoacyl-tRNA synthetase family. Monomer.

The protein resides in the cytoplasm. The catalysed reaction is tRNA(Arg) + L-arginine + ATP = L-arginyl-tRNA(Arg) + AMP + diphosphate. The sequence is that of Arginine--tRNA ligase from Klebsiella pneumoniae subsp. pneumoniae (strain ATCC 700721 / MGH 78578).